The following is a 264-amino-acid chain: Glutamate racemase (264 aa).

Substrate-binding positions include 10–11 and 42–43; these read DS and YG. Cys73 acts as the Proton donor/acceptor in catalysis. 74-75 is a substrate binding site; that stretch reads NT. The Proton donor/acceptor role is filled by Cys183. 184–185 lines the substrate pocket; the sequence is TH.

The protein belongs to the aspartate/glutamate racemases family.

The enzyme catalyses L-glutamate = D-glutamate. The protein operates within cell wall biogenesis; peptidoglycan biosynthesis. In terms of biological role, provides the (R)-glutamate required for cell wall biosynthesis. This is Glutamate racemase from Streptococcus agalactiae serotype Ia (strain ATCC 27591 / A909 / CDC SS700).